The sequence spans 683 residues: Long-chain fatty acid transport protein 3 (683 aa).

Residues 3 to 23 (ALLLLPLLLLLPLLLLKLHLW) form a helical membrane-spanning segment. Residues 119–128 (GGDSGEGSAG) are compositionally biased toward gly residues. A disordered region spans residues 119–145 (GGDSGEGSAGEGERAAPGAGDAAAGSG). The segment covering 133–145 (AAPGAGDAAAGSG) has biased composition (low complexity). Residues 288–292 (TSGTT), H331, T428, D528, R543, and K635 contribute to the ATP site.

Belongs to the ATP-dependent AMP-binding enzyme family. In terms of tissue distribution, expressed in bronchial and bronchiolar epithelial cells (at protein level).

The protein localises to the mitochondrion membrane. It catalyses the reaction a fatty acid(in) = a fatty acid(out). The enzyme catalyses a long-chain fatty acid + ATP + CoA = a long-chain fatty acyl-CoA + AMP + diphosphate. The catalysed reaction is hexadecanoate + ATP + CoA = hexadecanoyl-CoA + AMP + diphosphate. It carries out the reaction (9Z)-octadecenoate + ATP + CoA = (9Z)-octadecenoyl-CoA + AMP + diphosphate. It catalyses the reaction (9Z,12Z)-octadecadienoate + ATP + CoA = (9Z,12Z)-octadecadienoyl-CoA + AMP + diphosphate. The enzyme catalyses (5Z,8Z,11Z,14Z)-eicosatetraenoate + ATP + CoA = (5Z,8Z,11Z,14Z)-eicosatetraenoyl-CoA + AMP + diphosphate. The catalysed reaction is a very long-chain fatty acid + ATP + CoA = a very long-chain fatty acyl-CoA + AMP + diphosphate. It carries out the reaction tetracosanoate + ATP + CoA = tetracosanoyl-CoA + AMP + diphosphate. Its function is as follows. Mainly functions as an acyl-CoA ligase catalyzing the ATP-dependent formation of fatty acyl-CoA using LCFA and very-long-chain fatty acids (VLCFA) as substrates. Can mediate the levels of long-chain fatty acids (LCFA) in the cell by facilitating their transport across membranes. This chain is Long-chain fatty acid transport protein 3, found in Homo sapiens (Human).